Consider the following 167-residue polypeptide: MTKKIAVFPGSFDPFTNGHLDTVKRASRLFDEVVVAAMTNTSKKPLFSSEEKLALISESTAGLPNVKAMAAPKRLTVEFARSIGAQFMIRGIRNVADFGYEADIATVNHDLDPEIETVFLLADKQYDALSSTIIKEVAAFGGDVHRFVPAPVEAALYAKLGDAHQTK.

Serine 11 contacts substrate. ATP-binding positions include 11–12 and histidine 19; that span reads SF. Lysine 43, threonine 76, and arginine 90 together coordinate substrate. ATP is bound by residues 91-93, glutamate 101, and 126-132; these read GIR and YDALSST.

It belongs to the bacterial CoaD family. In terms of assembly, homohexamer. Requires Mg(2+) as cofactor.

The protein localises to the cytoplasm. It catalyses the reaction (R)-4'-phosphopantetheine + ATP + H(+) = 3'-dephospho-CoA + diphosphate. It participates in cofactor biosynthesis; coenzyme A biosynthesis; CoA from (R)-pantothenate: step 4/5. Its function is as follows. Reversibly transfers an adenylyl group from ATP to 4'-phosphopantetheine, yielding dephospho-CoA (dPCoA) and pyrophosphate. This chain is Phosphopantetheine adenylyltransferase, found in Lacticaseibacillus paracasei (strain ATCC 334 / BCRC 17002 / CCUG 31169 / CIP 107868 / KCTC 3260 / NRRL B-441) (Lactobacillus paracasei).